The primary structure comprises 271 residues: ATP synthase subunit a (271 aa).

The next 5 membrane-spanning stretches (helical) occupy residues 38 to 58 (FWTL…LFLV), 100 to 120 (LIAP…LMDL), 146 to 166 (DVNI…FYSI), 220 to 240 (LIFI…LNVP), and 242 to 262 (AIFH…LTIV).

This sequence belongs to the ATPase A chain family. As to quaternary structure, F-type ATPases have 2 components, CF(1) - the catalytic core - and CF(0) - the membrane proton channel. CF(1) has five subunits: alpha(3), beta(3), gamma(1), delta(1), epsilon(1). CF(0) has three main subunits: a(1), b(2) and c(9-12). The alpha and beta chains form an alternating ring which encloses part of the gamma chain. CF(1) is attached to CF(0) by a central stalk formed by the gamma and epsilon chains, while a peripheral stalk is formed by the delta and b chains.

Its subcellular location is the cell inner membrane. Functionally, key component of the proton channel; it plays a direct role in the translocation of protons across the membrane. In Salmonella choleraesuis (strain SC-B67), this protein is ATP synthase subunit a.